A 213-amino-acid polypeptide reads, in one-letter code: ATP synthase peripheral stalk subunit OSCP, mitochondrial (213 aa).

A mitochondrion-targeting transit peptide spans 1 to 23 (MAALAVSGLSQQVRCFSTSVVRP). Residues 5-23 (AVSGLSQQVRCFSTSVVRP) carry the SIFI-degron motif. Residues lysine 54, lysine 60, lysine 70, and lysine 73 each carry the N6-acetyllysine modification. Lysine 90 is modified (N6-succinyllysine). Residues lysine 100, lysine 158, and lysine 162 each carry the N6-acetyllysine; alternate modification. 3 positions are modified to N6-succinyllysine; alternate: lysine 100, lysine 158, and lysine 162. N6-acetyllysine occurs at positions 172, 176, and 192. Lysine 199 bears the N6-succinyllysine mark.

Belongs to the ATPase delta chain family. Component of the ATP synthase complex composed at least of ATP5F1A/subunit alpha, ATP5F1B/subunit beta, ATP5MC1/subunit c (homooctomer), MT-ATP6/subunit a, MT-ATP8/subunit 8, ATP5ME/subunit e, ATP5MF/subunit f, ATP5MG/subunit g, ATP5MK/subunit k, ATP5MJ/subunit j, ATP5F1C/subunit gamma, ATP5F1D/subunit delta, ATP5F1E/subunit epsilon, ATP5PF/subunit F6, ATP5PB/subunit b, ATP5PD/subunit d, ATP5PO/subunit OSCP. ATP synthase complex consists of a soluble F(1) head domain (subunits alpha(3) and beta(3)) - the catalytic core - and a membrane F(0) domain - the membrane proton channel (subunits c, a, 8, e, f, g, k and j). These two domains are linked by a central stalk (subunits gamma, delta, and epsilon) rotating inside the F1 region and a stationary peripheral stalk (subunits F6, b, d, and OSCP). Post-translationally, acetylation at Lys-162 decreases ATP production. Deacetylated by SIRT3. In terms of processing, in response to mitochondrial stress, the precursor protein is ubiquitinated by the SIFI complex in the cytoplasm before mitochondrial import, leading to its degradation. Within the SIFI complex, UBR4 initiates ubiquitin chain that are further elongated or branched by KCMF1.

The protein localises to the mitochondrion. It localises to the mitochondrion inner membrane. In terms of biological role, subunit OSCP, of the mitochondrial membrane ATP synthase complex (F(1)F(0) ATP synthase or Complex V) that produces ATP from ADP in the presence of a proton gradient across the membrane which is generated by electron transport complexes of the respiratory chain. ATP synthase complex consist of a soluble F(1) head domain - the catalytic core - and a membrane F(1) domain - the membrane proton channel. These two domains are linked by a central stalk rotating inside the F(1) region and a stationary peripheral stalk. During catalysis, ATP synthesis in the catalytic domain of F(1) is coupled via a rotary mechanism of the central stalk subunits to proton translocation. In vivo, can only synthesize ATP although its ATP hydrolase activity can be activated artificially in vitro. Part of the complex F(0) domain. Part of the complex F(0) domain and the peripheric stalk, which acts as a stator to hold the catalytic alpha(3)beta(3) subcomplex and subunit a/ATP6 static relative to the rotary elements. This is ATP synthase peripheral stalk subunit OSCP, mitochondrial from Bos taurus (Bovine).